The following is a 451-amino-acid chain: tRNA modification GTPase MnmE (451 aa).

Positions 23, 80, and 119 each coordinate (6S)-5-formyl-5,6,7,8-tetrahydrofolate. Positions 215–372 constitute a TrmE-type G domain; the sequence is GIKVVLAGQP…LRAALLKTAG (158 aa). A K(+)-binding site is contributed by N225. GTP is bound by residues 225 to 230, 244 to 250, and 269 to 272; these read NVGKSS, TDIPGTT, and DTAG. S229 is a binding site for Mg(2+). Residues T244, I246, and T249 each coordinate K(+). T250 contributes to the Mg(2+) binding site. K451 is a (6S)-5-formyl-5,6,7,8-tetrahydrofolate binding site.

This sequence belongs to the TRAFAC class TrmE-Era-EngA-EngB-Septin-like GTPase superfamily. TrmE GTPase family. In terms of assembly, homodimer. Heterotetramer of two MnmE and two MnmG subunits. The cofactor is K(+).

It localises to the cytoplasm. In terms of biological role, exhibits a very high intrinsic GTPase hydrolysis rate. Involved in the addition of a carboxymethylaminomethyl (cmnm) group at the wobble position (U34) of certain tRNAs, forming tRNA-cmnm(5)s(2)U34. The polypeptide is tRNA modification GTPase MnmE (Nitrosomonas europaea (strain ATCC 19718 / CIP 103999 / KCTC 2705 / NBRC 14298)).